Reading from the N-terminus, the 366-residue chain is Chorismate synthase (366 aa).

R48 and R54 together coordinate NADP(+). Residues 125–127 (RSS), 238–239 (NA), G278, 293–297 (KPTSS), and R319 each bind FMN.

This sequence belongs to the chorismate synthase family. In terms of assembly, homotetramer. The cofactor is FMNH2.

The catalysed reaction is 5-O-(1-carboxyvinyl)-3-phosphoshikimate = chorismate + phosphate. The protein operates within metabolic intermediate biosynthesis; chorismate biosynthesis; chorismate from D-erythrose 4-phosphate and phosphoenolpyruvate: step 7/7. Functionally, catalyzes the anti-1,4-elimination of the C-3 phosphate and the C-6 proR hydrogen from 5-enolpyruvylshikimate-3-phosphate (EPSP) to yield chorismate, which is the branch point compound that serves as the starting substrate for the three terminal pathways of aromatic amino acid biosynthesis. This reaction introduces a second double bond into the aromatic ring system. The protein is Chorismate synthase of Neisseria meningitidis serogroup B (strain ATCC BAA-335 / MC58).